A 52-amino-acid chain; its full sequence is Disintegrin multisquamatin (52 aa).

Residues 1–50 form the Disintegrin domain; that stretch reads EGEECESGPCCRNCKFLKEGTICKRARGDDMDDYCNGKTCDCPRNPHKGP. Cystine bridges form between Cys5–Cys14, Cys10–Cys35, Cys11–Cys40, and Cys23–Cys42. The Cell attachment site signature appears at 27 to 29; that stretch reads RGD.

The protein belongs to the venom metalloproteinase (M12B) family. P-II subfamily. P-IIa sub-subfamily. Monomer. In terms of tissue distribution, expressed by the venom gland.

The protein resides in the secreted. Functionally, inhibits ADP-induced human, canine and rabbit platelet aggregation by binding with high affinity to alpha-IIb/beta-3 (ITGA2B/ITGB3). The chain is Disintegrin multisquamatin from Echis multisquamatus (Central Asian sand viper).